The chain runs to 87 residues: UPF0335 protein Avi_3695 (87 aa).

It belongs to the UPF0335 family.

In Allorhizobium ampelinum (strain ATCC BAA-846 / DSM 112012 / S4) (Agrobacterium vitis (strain S4)), this protein is UPF0335 protein Avi_3695.